A 207-amino-acid chain; its full sequence is Large ribosomal subunit protein uL4 (207 aa).

A disordered region spans residues 50-76 (KTKTVSEVSGTTKKPFKQKGTGNARQG).

This sequence belongs to the universal ribosomal protein uL4 family. Part of the 50S ribosomal subunit.

In terms of biological role, one of the primary rRNA binding proteins, this protein initially binds near the 5'-end of the 23S rRNA. It is important during the early stages of 50S assembly. It makes multiple contacts with different domains of the 23S rRNA in the assembled 50S subunit and ribosome. Forms part of the polypeptide exit tunnel. In Rickettsia canadensis (strain McKiel), this protein is Large ribosomal subunit protein uL4.